We begin with the raw amino-acid sequence, 296 residues long: Ribosomal protein L11 methyltransferase (296 aa).

Positions 151, 172, 194, and 233 each coordinate S-adenosyl-L-methionine.

It belongs to the methyltransferase superfamily. PrmA family.

It is found in the cytoplasm. The enzyme catalyses L-lysyl-[protein] + 3 S-adenosyl-L-methionine = N(6),N(6),N(6)-trimethyl-L-lysyl-[protein] + 3 S-adenosyl-L-homocysteine + 3 H(+). Functionally, methylates ribosomal protein L11. The protein is Ribosomal protein L11 methyltransferase of Dechloromonas aromatica (strain RCB).